Here is a 255-residue protein sequence, read N- to C-terminus: Hydroxyacylglutathione hydrolase (255 aa).

His53, His55, Asp57, His58, His110, Asp127, and His165 together coordinate Zn(2+).

It belongs to the metallo-beta-lactamase superfamily. Glyoxalase II family. As to quaternary structure, monomer. Requires Zn(2+) as cofactor.

The enzyme catalyses an S-(2-hydroxyacyl)glutathione + H2O = a 2-hydroxy carboxylate + glutathione + H(+). The protein operates within secondary metabolite metabolism; methylglyoxal degradation; (R)-lactate from methylglyoxal: step 2/2. Thiolesterase that catalyzes the hydrolysis of S-D-lactoyl-glutathione to form glutathione and D-lactic acid. This is Hydroxyacylglutathione hydrolase from Xanthomonas campestris pv. campestris (strain 8004).